The chain runs to 432 residues: Ribosomal protein uS12 methylthiotransferase RimO (432 aa).

Residues 2 to 115 (IRVAVITLGC…LPEIINRVLK (114 aa)) form the MTTase N-terminal domain. C11, C47, C78, C151, C155, and C158 together coordinate [4Fe-4S] cluster. The Radical SAM core domain maps to 137 to 367 (EDGKPFAYLK…MLHQQSITRA (231 aa)).

The protein belongs to the methylthiotransferase family. RimO subfamily. [4Fe-4S] cluster serves as cofactor.

It is found in the cytoplasm. It catalyses the reaction L-aspartate(89)-[ribosomal protein uS12]-hydrogen + (sulfur carrier)-SH + AH2 + 2 S-adenosyl-L-methionine = 3-methylsulfanyl-L-aspartate(89)-[ribosomal protein uS12]-hydrogen + (sulfur carrier)-H + 5'-deoxyadenosine + L-methionine + A + S-adenosyl-L-homocysteine + 2 H(+). Catalyzes the methylthiolation of an aspartic acid residue of ribosomal protein uS12. In Moorella thermoacetica (strain ATCC 39073 / JCM 9320), this protein is Ribosomal protein uS12 methylthiotransferase RimO.